Reading from the N-terminus, the 253-residue chain is RNA polymerase sigma factor SigI6 (253 aa).

The short motif at glutamate 63–isoleucine 76 is the Polymerase core binding element. The segment at residues threonine 203–lysine 222 is a DNA-binding region (H-T-H motif).

The protein belongs to the sigma-70 factor family. SigI subfamily. Interacts with RsgI6.

It is found in the cytoplasm. Negatively regulated by the anti-sigma-I factor RsgI6. Binding of the polysaccharide substrate to RsgI6 may lead to the release and activation of SigI6. In terms of biological role, sigma factors are initiation factors that promote the attachment of RNA polymerase to specific initiation sites and are then released. This sigma factor is involved in regulation of cellulosomal genes via an external polysaccharide-sensing mechanism. Recognizes the predicted promoters associated with sigI6 itself, xyn11B, xyn10D, xyn10Z, xyn10Y, cel9V, cseP, sigI1, cipA, and rsgI5. This Acetivibrio thermocellus (strain ATCC 27405 / DSM 1237 / JCM 9322 / NBRC 103400 / NCIMB 10682 / NRRL B-4536 / VPI 7372) (Clostridium thermocellum) protein is RNA polymerase sigma factor SigI6.